Consider the following 280-residue polypeptide: L-proline cis-4-hydroxylase (280 aa).

The Fe cation site is built by H106, D108, and H154. Residue R164 participates in 2-oxoglutarate binding.

The protein belongs to the L-proline cis-4-/cis-3-hydroxylase family. Fe(2+) is required as a cofactor.

The catalysed reaction is L-proline + 2-oxoglutarate + O2 = cis-4-hydroxy-L-proline + succinate + CO2. Inhibited by metal ions such as Co(2+), Zn(2+), Cu(2+) or Ni(2+). Is also inhibited by EDTA or diethylpyrocarbonate (DEPC) in vitro. Unlike the procollagen-proline cis-3- and trans-4-hydroxylases from mammals, does not necessarily require L-ascorbate for activity although it does increase the activity of the enzyme. In terms of biological role, dioxygenase that catalyzes the 2-oxoglutarate-dependent selective hydroxylation of free L-proline to cis-4-hydroxy-L-proline (cis-4-Hyp). The chain is L-proline cis-4-hydroxylase from Rhizobium meliloti (strain 1021) (Ensifer meliloti).